A 188-amino-acid polypeptide reads, in one-letter code: UPF0301 protein XF_2228 (188 aa).

This sequence belongs to the UPF0301 (AlgH) family.

This chain is UPF0301 protein XF_2228, found in Xylella fastidiosa (strain 9a5c).